Here is a 101-residue protein sequence, read N- to C-terminus: Replication restart protein PriB (101 aa).

In terms of domain architecture, SSB spans methionine 1–threonine 101.

It belongs to the PriB family. As to quaternary structure, homodimer. Interacts with PriA and DnaT. Component of the replication restart primosome. Primosome assembly occurs via a 'hand-off' mechanism. PriA binds to replication forks, subsequently PriB then DnaT bind; DnaT then displaces ssDNA to generate the helicase loading substrate.

In terms of biological role, involved in the restart of stalled replication forks, which reloads the replicative helicase on sites other than the origin of replication; the PriA-PriB pathway is the major replication restart pathway. During primosome assembly it facilitates complex formation between PriA and DnaT on DNA; stabilizes PriA on DNA. Stimulates the DNA unwinding activity of PriA helicase. This is Replication restart protein PriB from Shewanella oneidensis (strain ATCC 700550 / JCM 31522 / CIP 106686 / LMG 19005 / NCIMB 14063 / MR-1).